A 255-amino-acid polypeptide reads, in one-letter code: NADH dehydrogenase [ubiquinone] flavoprotein 2, mitochondrial (255 aa).

The N-terminal 35 residues, 1–35, are a transit peptide targeting the mitochondrion; sequence MLARLAAKRLLEIRQVFRQPTSQVTRSLSTALNYH. [2Fe-2S] cluster is bound by residues Cys-130, Cys-135, Cys-171, and Cys-175. Residues 214–255 form a disordered region; that stretch reads RKGEKPPHGTQNPKRIKCGPEGGNKTLLGEPKPPQFRDLDAC.

This sequence belongs to the complex I 24 kDa subunit family. Complex I is composed of at least 49 different subunits. This is a component of the flavoprotein-sulfur (FP) fragment of the enzyme. The cofactor is [2Fe-2S] cluster.

The protein resides in the mitochondrion inner membrane. It carries out the reaction a ubiquinone + NADH + 5 H(+)(in) = a ubiquinol + NAD(+) + 4 H(+)(out). Functionally, core subunit of the mitochondrial membrane respiratory chain NADH dehydrogenase (Complex I) that is believed to belong to the minimal assembly required for catalysis. Complex I functions in the transfer of electrons from NADH to the respiratory chain. The immediate electron acceptor for the enzyme is believed to be ubiquinone. The polypeptide is NADH dehydrogenase [ubiquinone] flavoprotein 2, mitochondrial (Arabidopsis thaliana (Mouse-ear cress)).